We begin with the raw amino-acid sequence, 208 residues long: Protein-L-isoaspartate O-methyltransferase (208 aa).

S59 is an active-site residue.

This sequence belongs to the methyltransferase superfamily. L-isoaspartyl/D-aspartyl protein methyltransferase family.

Its subcellular location is the cytoplasm. The enzyme catalyses [protein]-L-isoaspartate + S-adenosyl-L-methionine = [protein]-L-isoaspartate alpha-methyl ester + S-adenosyl-L-homocysteine. Its function is as follows. Catalyzes the methyl esterification of L-isoaspartyl residues in peptides and proteins that result from spontaneous decomposition of normal L-aspartyl and L-asparaginyl residues. It plays a role in the repair and/or degradation of damaged proteins. The chain is Protein-L-isoaspartate O-methyltransferase from Citrobacter koseri (strain ATCC BAA-895 / CDC 4225-83 / SGSC4696).